Reading from the N-terminus, the 265-residue chain is Ubiquinone biosynthesis protein COQ4 homolog, mitochondrial (265 aa).

Zn(2+)-binding residues include histidine 162, aspartate 163, histidine 166, and glutamate 178.

The protein belongs to the COQ4 family. Component of a multi-subunit COQ enzyme complex. Zn(2+) is required as a cofactor.

It localises to the mitochondrion inner membrane. It carries out the reaction a 4-hydroxy-3-methoxy-5-(all-trans-polyprenyl)benzoate + H(+) = a 2-methoxy-6-(all-trans-polyprenyl)phenol + CO2. It participates in cofactor biosynthesis; ubiquinone biosynthesis. In terms of biological role, lyase that catalyzes the C1-decarboxylation of 4-hydroxy-3-methoxy-5-(all-trans-polyprenyl)benzoic acid into 2-methoxy-6-(all-trans-polyprenyl)phenol during ubiquinone biosynthesis. The sequence is that of Ubiquinone biosynthesis protein COQ4 homolog, mitochondrial from Drosophila willistoni (Fruit fly).